Consider the following 38-residue polypeptide: Cytochrome b6-f complex subunit 5 (38 aa).

A helical transmembrane segment spans residues 5-25 (LLCGIVLGLIPVTLLGLFVAA).

This sequence belongs to the PetG family. As to quaternary structure, the 4 large subunits of the cytochrome b6-f complex are cytochrome b6, subunit IV (17 kDa polypeptide, PetD), cytochrome f and the Rieske protein, while the 4 small subunits are PetG, PetL, PetM and PetN. The complex functions as a dimer.

It is found in the cellular thylakoid membrane. Functionally, component of the cytochrome b6-f complex, which mediates electron transfer between photosystem II (PSII) and photosystem I (PSI), cyclic electron flow around PSI, and state transitions. PetG is required for either the stability or assembly of the cytochrome b6-f complex. This is Cytochrome b6-f complex subunit 5 from Parasynechococcus marenigrum (strain WH8102).